A 443-amino-acid polypeptide reads, in one-letter code: tRNA modification GTPase MnmE (443 aa).

(6S)-5-formyl-5,6,7,8-tetrahydrofolate contacts are provided by Arg-23, Glu-81, and Lys-119. The 156-residue stretch at 214 to 369 (GMRVAILGKP…LLSALKERAI (156 aa)) folds into the TrmE-type G domain. GTP-binding positions include 224 to 229 (NVGKST), 243 to 249 (SEYPGTT), and 268 to 271 (DTAG). Residues Ser-228 and Thr-249 each coordinate Mg(2+). A (6S)-5-formyl-5,6,7,8-tetrahydrofolate-binding site is contributed by Lys-443.

Belongs to the TRAFAC class TrmE-Era-EngA-EngB-Septin-like GTPase superfamily. TrmE GTPase family. In terms of assembly, homodimer. Heterotetramer of two MnmE and two MnmG subunits. Requires K(+) as cofactor.

The protein localises to the cytoplasm. Functionally, exhibits a very high intrinsic GTPase hydrolysis rate. Involved in the addition of a carboxymethylaminomethyl (cmnm) group at the wobble position (U34) of certain tRNAs, forming tRNA-cmnm(5)s(2)U34. The protein is tRNA modification GTPase MnmE of Anaplasma marginale (strain St. Maries).